The sequence spans 354 residues: UDP-N-acetylglucosamine--N-acetylmuramyl-(pentapeptide) pyrophosphoryl-undecaprenol N-acetylglucosamine transferase (354 aa).

UDP-N-acetyl-alpha-D-glucosamine contacts are provided by residues 13–15, Asn-125, Ser-189, Ile-242, 261–266, and Gln-286; these read SGG and ALTVSE.

Belongs to the glycosyltransferase 28 family. MurG subfamily.

It is found in the cell inner membrane. The enzyme catalyses di-trans,octa-cis-undecaprenyl diphospho-N-acetyl-alpha-D-muramoyl-L-alanyl-D-glutamyl-meso-2,6-diaminopimeloyl-D-alanyl-D-alanine + UDP-N-acetyl-alpha-D-glucosamine = di-trans,octa-cis-undecaprenyl diphospho-[N-acetyl-alpha-D-glucosaminyl-(1-&gt;4)]-N-acetyl-alpha-D-muramoyl-L-alanyl-D-glutamyl-meso-2,6-diaminopimeloyl-D-alanyl-D-alanine + UDP + H(+). It participates in cell wall biogenesis; peptidoglycan biosynthesis. In terms of biological role, cell wall formation. Catalyzes the transfer of a GlcNAc subunit on undecaprenyl-pyrophosphoryl-MurNAc-pentapeptide (lipid intermediate I) to form undecaprenyl-pyrophosphoryl-MurNAc-(pentapeptide)GlcNAc (lipid intermediate II). The polypeptide is UDP-N-acetylglucosamine--N-acetylmuramyl-(pentapeptide) pyrophosphoryl-undecaprenol N-acetylglucosamine transferase (Buchnera aphidicola subsp. Acyrthosiphon pisum (strain APS) (Acyrthosiphon pisum symbiotic bacterium)).